Here is a 559-residue protein sequence, read N- to C-terminus: MPLVKRNIDPRHLCHTALPRGIKNELECVTNISLANIIRQLSSLSKYAEDIFGELFNEAHSFSFRVNSLQERVDRLSVSVTQLDPKEEELSLQDITMRKAFRSSTIQDQQLFDRKTLPIPLQETYDVCEQPPPLNILTPYRDDGKEGLKFYTNPSYFFDLWKEKMLQDTEDKRKEKRKQKQKNLDRPHEPEKVPRAPHDRRREWQKLAQGPELAEDDANLLHKHIEVANGPASHFETRPQTYVDHMDGSYSLSALPFSQMSELLTRAEERVLVRPHEPPPPPPMHGAGEAKPIPTCISSATGLIENRPQSPATGRTPVFVSPTPPPPPPPLPSALSTSSLRASMTSTPPPPVPPPPPPPATALQAPAVPPPPAPLQIAPGVLHPAPPPIAPPLVQPSPPVARAAPVCETVPVHPLPQGEVQGLPPPPPPPPLPPPGIRPSSPVTVTALAHPPSGLHPTPSTAPGPHVPLMPPSPPSQVIPASEPKRHPSTLPVISDARSVLLEAIRKGIQLRKVEEQREQEAKHERIENDVATILSRRIAVEYSDSEDDSEFDEVDWLE.

3 disordered regions span residues 170 to 202, 304 to 383, and 412 to 490; these read EDKR…DRRR, IENR…GVLH, and VHPL…HPST. Residues 182–202 show a composition bias toward basic and acidic residues; sequence KNLDRPHEPEKVPRAPHDRRR. The segment covering 304 to 313 has biased composition (polar residues); the sequence is IENRPQSPAT. Residues 322 to 332 are compositionally biased toward pro residues; the sequence is PTPPPPPPPLP. A compositionally biased stretch (low complexity) spans 333 to 346; the sequence is SALSTSSLRASMTS. Arg341 carries the post-translational modification Asymmetric dimethylarginine; alternate. The residue at position 341 (Arg341) is an Omega-N-methylarginine; alternate. Pro residues-rich tracts occupy residues 347-360, 423-437, and 460-477; these read TPPP…PPPA, LPPP…PPGI, and STAP…PPSQ. A Phosphoserine modification is found at Ser489. Residues 497–514 enclose the WH2 domain; it reads ARSVLLEAIRKGIQLRKV.

Belongs to the SCAR/WAVE family. Component of the WAVE1 complex composed of ABI2, CYFIP1 or CYFIP2, BRK1, NCKAP1 and WASF1/WAVE1. Within the complex, a heterodimer containing NCKAP1 and CYFIP1 interacts with a heterotrimer formed by WAVE1, ABI2 and BRK1. CYFIP2 binds to activated RAC1 which causes the complex to dissociate, releasing activated WASF1. The complex can also be activated by NCK1. Binds actin and the Arp2/3 complex. Interacts with BAIAP2. Interacts with SHANK3; the interaction mediates the association of SHANK3 with the WAVE1 complex. Interacts with ABI1 (via N-terminus). Interacts with SORBS2; this interaction greatly enhances phosphorylation by ABL1 and dephosphorylation by PTPN12 and might mediate partial to focal adhesion sites.

The protein localises to the cytoplasm. It localises to the cytoskeleton. Its subcellular location is the synapse. The protein resides in the cell junction. It is found in the focal adhesion. Its function is as follows. Downstream effector molecule involved in the transmission of signals from tyrosine kinase receptors and small GTPases to the actin cytoskeleton. Promotes formation of actin filaments. Part of the WAVE complex that regulates lamellipodia formation. The WAVE complex regulates actin filament reorganization via its interaction with the Arp2/3 complex. As component of the WAVE1 complex, required for BDNF-NTRK2 endocytic trafficking and signaling from early endosomes. Also involved in the regulation of mitochondrial dynamics. The polypeptide is Actin-binding protein WASF1 (WASF1) (Pongo abelii (Sumatran orangutan)).